Here is a 73-residue protein sequence, read N- to C-terminus: Probable minor pilin MMP0528 (73 aa).

A propeptide spanning residues 1 to 10 is cleaved from the precursor; that stretch reads MLKKLYSKKG. The short motif at 11-19 is the QXSXEXXXL element; the sequence is QVSMEMGIL.

The N-terminus is probably cleaved by the prepilin peptidase EppA, which recognizes the class III signal sequence.

The protein resides in the secreted. It is found in the cell surface. It localises to the fimbrium. The protein is Probable minor pilin MMP0528 of Methanococcus maripaludis (strain DSM 14266 / JCM 13030 / NBRC 101832 / S2 / LL).